Consider the following 50-residue polypeptide: MARYRCCRSQSRSRCRPRRRRCRTRRRRCCRRRRRRVCCRRYTVVRCRRR.

The protein belongs to the protamine P1 family. As to expression, testis.

It localises to the nucleus. It is found in the chromosome. Functionally, protamines substitute for histones in the chromatin of sperm during the haploid phase of spermatogenesis. They compact sperm DNA into a highly condensed, stable and inactive complex. This is Sperm protamine P1 (PRM1) from Natalus stramineus (Mexican funnel-eared bat).